The chain runs to 462 residues: Cytochrome P450 20A1 (462 aa).

Residues 4–24 (FAIFAVTFLLALVGAVLYLYP) traverse the membrane as a helical segment. Cys409 lines the heme pocket.

It belongs to the cytochrome P450 family. The cofactor is heme.

The protein resides in the membrane. The chain is Cytochrome P450 20A1 (CYP20A1) from Bos taurus (Bovine).